Here is a 75-residue protein sequence, read N- to C-terminus: SPbeta prophage-derived uncharacterized protein YomT (75 aa).

This Bacillus subtilis (strain 168) protein is SPbeta prophage-derived uncharacterized protein YomT (yomT).